Consider the following 355-residue polypeptide: Class E basic helix-loop-helix protein 22 (355 aa).

2 disordered regions span residues 34-90 (AFRS…GGGG) and 128-215 (GRGS…KEQK). Gly residues-rich tracts occupy residues 81 to 90 (GGGGASGGGG) and 185 to 207 (GGSGLPPGGPTSGGGSGGGGGGS). Residues 216–270 (ALRLNINARERRRMHDLNDALDELRAVIPYAHSPSVRKLSKIATLLLAKNYILMQ) enclose the bHLH domain.

As to quaternary structure, interacts with PRDM8. Brain-specific, with the highest expression in the cerebellum.

The protein localises to the nucleus. In terms of biological role, inhibits DNA binding of TCF3/E47 homodimers and TCF3 (E47)/NEUROD1 heterodimers and acts as a strong repressor of Neurod1 and Myod-responsive genes, probably by heterodimerization with class a basic helix-loop-helix factors. Despite the presence of an intact basic domain, does not bind to DNA. In the brain, may function as an area-specific transcription factor that regulates the postmitotic acquisition of area identities and elucidate the genetic hierarchy between progenitors and postmitotic neurons driving neocortical arealization. May be required for the survival of a specific population of inhibitory neurons in the superficial laminae of the spinal cord dorsal horn that may regulate pruritis. Seems to play a crucial role in the retinogenesis, in the specification of amacrine and bipolar subtypes. Forms with PRDM8 a transcriptional repressor complex controlling genes involved in neural development and neuronal differentiation. This Mus musculus (Mouse) protein is Class E basic helix-loop-helix protein 22 (Bhlhe22).